Reading from the N-terminus, the 261-residue chain is tRNA pseudouridine synthase A (261 aa).

Asp55 serves as the catalytic Nucleophile. Tyr114 is a binding site for substrate.

Belongs to the tRNA pseudouridine synthase TruA family. As to quaternary structure, homodimer.

The enzyme catalyses uridine(38/39/40) in tRNA = pseudouridine(38/39/40) in tRNA. Its function is as follows. Formation of pseudouridine at positions 38, 39 and 40 in the anticodon stem and loop of transfer RNAs. The sequence is that of tRNA pseudouridine synthase A from Paracoccus denitrificans (strain Pd 1222).